The following is a 391-amino-acid chain: Uroporphyrinogen decarboxylase, chloroplastic (391 aa).

Substrate-binding positions include 71-75 (RQAGR), F90, S120, D121, Y198, S253, and H368.

It belongs to the uroporphyrinogen decarboxylase family. Homodimer.

Its subcellular location is the plastid. It localises to the chloroplast. It carries out the reaction uroporphyrinogen III + 4 H(+) = coproporphyrinogen III + 4 CO2. Its pathway is porphyrin-containing compound metabolism; protoporphyrin-IX biosynthesis; coproporphyrinogen-III from 5-aminolevulinate: step 4/4. Its function is as follows. Catalyzes the decarboxylation of four acetate groups of uroporphyrinogen-III to yield coproporphyrinogen-III. The protein is Uroporphyrinogen decarboxylase, chloroplastic (DCUP) of Nicotiana tabacum (Common tobacco).